A 921-amino-acid chain; its full sequence is Sodium/calcium exchanger 2 (921 aa).

The first 20 residues, 1 to 20 (MAPLALVGVTLLLAAPPCSG), serve as a signal peptide directing secretion. The Extracellular segment spans residues 21-68 (AATPTPSLPPPPANDSDTSTGGCQGSYRCQPGVLLPVWEPDDPSLGDK). Residues 22 to 42 (ATPTPSLPPPPANDSDTSTGG) form a disordered region. A glycan (N-linked (GlcNAc...) asparagine) is linked at Asn-34. Residues 69 to 90 (AARAVVYFVAMVYMFLGVSIIA) form a helical membrane-spanning segment. The Cytoplasmic segment spans residues 91–130 (DRFMAAIEVITSKEKEITITKANGETSVGTVRIWNETVSN). The helical transmembrane segment at 131-152 (LTLMALGSSAPEILLSVIEVCG) threads the bilayer. The stretch at 135–175 (ALGSSAPEILLSVIEVCGHNFQAGELGPGTIVGSAAFNMFV) is one Alpha-1 repeat. At 153 to 164 (HNFQAGELGPGT) the chain is on the extracellular side. Residues 165–185 (IVGSAAFNMFVVIAVCIYVIP) traverse the membrane as a helical segment. Residues 186–196 (AGESRKIKHLR) lie on the Cytoplasmic side of the membrane. A helical transmembrane segment spans residues 197–219 (VFFVTASWSIFAYVWLYLILAVF). At 220 to 222 (SPG) the chain is on the extracellular side. Residues 223–246 (VVQVWEALLTLVFFPVCVVFAWMA) traverse the membrane as a helical segment. Residues 247–720 (DKRLLFYKYV…DGSREERLPS (474 aa)) lie on the Cytoplasmic side of the membrane. The segment at 248–267 (KRLLFYKYVYKRYRTDPRSG) is putative calmodulin-binding region. 2 Calx-beta domains span residues 384–483 (GAGE…VRLL) and 512–612 (ATVT…IELG). Positions 407, 443, 468, 469, 471, 473, 476, 518, 519, 520, 536, 598, 599, and 600 each coordinate Ca(2+). Ser-622 is subject to Phosphoserine. Glu-665 provides a ligand contact to Ca(2+). A helical transmembrane segment spans residues 721-740 (CFDYVMHFLTVFWKVLFACV). At 741–747 (PPTEYCH) the chain is on the extracellular side. A helical membrane pass occupies residues 748-770 (GWACFGVSILVIGLLTALIGDLA). Topologically, residues 771 to 772 (SH) are cytoplasmic. The helical transmembrane segment at 773 to 791 (FGCTVGLKDSVNAVVFVAL) threads the bilayer. Residues 790–826 (ALGTSIPDTFASKVAALQDQCADASIGNVTGSNAVNV) form an Alpha-2 repeat. The Extracellular portion of the chain corresponds to 792-822 (GTSIPDTFASKVAALQDQCADASIGNVTGSN). Asn-817 carries an N-linked (GlcNAc...) asparagine glycan. The chain crosses the membrane as a helical span at residues 823–843 (AVNVFLGLGVAWSVAAVYWAV). Residues 844–854 (QGRPFEVRTGT) are Cytoplasmic-facing. A helical transmembrane segment spans residues 855–875 (LAFSVTLFTVFAFVGIAVLLY). The Extracellular portion of the chain corresponds to 876–892 (RRRPHIGGELGGPRGPK). Residues 893–909 (LATTALFLGLWLLYILF) traverse the membrane as a helical segment. Topologically, residues 910 to 921 (ASLEAYCHIRGF) are cytoplasmic.

This sequence belongs to the Ca(2+):cation antiporter (CaCA) (TC 2.A.19) family. SLC8 subfamily.

Its subcellular location is the cell membrane. It is found in the basolateral cell membrane. The protein localises to the perikaryon. The protein resides in the cell projection. It localises to the dendrite. Its subcellular location is the dendritic spine. The enzyme catalyses Ca(2+)(in) + 3 Na(+)(out) = Ca(2+)(out) + 3 Na(+)(in). Its activity is regulated as follows. Calcium transport is down-regulated by Na(+) and stimulated by Ca(2+). Mediates the electrogenic exchange of Ca(2+) against Na(+) ions across the cell membrane, and thereby contributes to the regulation of cytoplasmic Ca(2+) levels and Ca(2+)-dependent cellular processes. Contributes to cellular Ca(2+) homeostasis in excitable cells. Contributes to the rapid decrease of cytoplasmic Ca(2+) levels back to baseline after neuronal activation, and thereby contributes to modulate synaptic plasticity, learning and memory. Plays a role in regulating urinary Ca(2+) and Na(+) excretion. The polypeptide is Sodium/calcium exchanger 2 (SLC8A2) (Homo sapiens (Human)).